A 925-amino-acid chain; its full sequence is Coronin-7 (925 aa).

4 WD repeats span residues 75-115 (CHSD…QALP), 124-163 (PEDL…PLTE), 166-205 (AHGD…QASQ), and 209-253 (AHEN…SALA). 2 disordered regions span residues 196-216 (DPRT…SRDS) and 399-465 (LVPP…SLQS). Positions 201-210 (PQASQSTQAH) are enriched in polar residues. Positions 429 to 460 (SSPPSSLTSPSTPSSLGPTLSSTSGIGTGPSL) are enriched in low complexity. 2 positions are modified to phosphoserine: serine 462 and serine 465. Lysine 472 participates in a covalent cross-link: Glycyl lysine isopeptide (Lys-Gly) (interchain with G-Cter in ubiquitin). WD repeat units follow at residues 542–582 (QNGA…LEEV), 592–632 (GHME…DRLK), and 635–674 (GHQD…EPLQ). Residue lysine 680 forms a Glycyl lysine isopeptide (Lys-Gly) (interchain with G-Cter in ubiquitin) linkage. Residues 728-768 (DVAPSTLVPSYEPRHWPGAPDWQGDARVFLYELLPESPFFM) form a WD 8 repeat. The interval 857–925 (LQPPDMSPVS…FEGVDEDEWD (69 aa)) is disordered. A compositionally biased stretch (low complexity) spans 866–882 (SQAPREAPARRAPSSAQ). Basic and acidic residues predominate over residues 884–896 (LEEKSDQQKKEEL). The residue at position 915 (serine 915) is a Phosphoserine.

It belongs to the WD repeat coronin family. Interacts with clathrin adapter AP1 complex. This interaction takes place at Golgi membranes and not AP1-positive endosomal membranes. Interacts (when ubiquitinated at Lys-472) with EPS15. The membrane-associated form is phosphorylated on tyrosine residues. Post-translationally, ubiquitinated via 'Lys-33'-linked ubiquitin chains by the BCR(KLHL20) E3 ubiquitin ligase complex: 'Lys-33'-linked ubiquitination promotes interaction with EPS15 and facilitates actin polymerization at the trans-Golgi network, thereby facilitating post-Golgi trafficking. Deubiquitinated by ZRANB1/TRABID.

Its subcellular location is the golgi apparatus membrane. The protein resides in the golgi apparatus. It localises to the trans-Golgi network. It is found in the cytoplasmic vesicle. The protein localises to the cytoplasm. Its subcellular location is the cytosol. Functionally, F-actin regulator involved in anterograde Golgi to endosome transport: upon ubiquitination via 'Lys-33'-linked ubiquitin chains by the BCR(KLHL20) E3 ubiquitin ligase complex, interacts with EPS15 and localizes to the trans-Golgi network, where it promotes actin polymerization, thereby facilitating post-Golgi trafficking. May play a role in the maintenance of the Golgi apparatus morphology. This Pongo abelii (Sumatran orangutan) protein is Coronin-7 (CORO7).